Consider the following 246-residue polypeptide: NLP effector protein 2 (246 aa).

The N-terminal stretch at M1–G19 is a signal peptide. The short motif at A113 to D123 is the Conserved undecapeptide motif I element. Residues G130 to E136 carry the Hepta-peptide GHRHDWE motif II motif.

This sequence belongs to the Necrosis inducing protein (NPP1) family.

The protein resides in the secreted. Its function is as follows. Secreted effector that contributes strongly to virulence during infection by P.capsici. Causes large necrotic areas in both host C.annuum and non-host N.benthamiana. This is NLP effector protein 2 from Phytophthora capsici.